We begin with the raw amino-acid sequence, 53 residues long: UPF0391 membrane protein PSEEN0090 (53 aa).

A run of 2 helical transmembrane segments spans residues 4–24 (WAIT…GGIA) and 29–49 (GIAK…FFFG).

The protein belongs to the UPF0391 family.

It localises to the cell membrane. The chain is UPF0391 membrane protein PSEEN0090 from Pseudomonas entomophila (strain L48).